Reading from the N-terminus, the 615-residue chain is 1-deoxy-D-xylulose-5-phosphate synthase (615 aa).

Thiamine diphosphate is bound by residues His76 and 117–119 (GHS). Residue Asp148 coordinates Mg(2+). Thiamine diphosphate contacts are provided by residues 149-150 (GA), Asn177, Tyr284, and Glu365. Asn177 contacts Mg(2+).

This sequence belongs to the transketolase family. DXPS subfamily. In terms of assembly, homodimer. Requires Mg(2+) as cofactor. The cofactor is thiamine diphosphate.

It carries out the reaction D-glyceraldehyde 3-phosphate + pyruvate + H(+) = 1-deoxy-D-xylulose 5-phosphate + CO2. It participates in metabolic intermediate biosynthesis; 1-deoxy-D-xylulose 5-phosphate biosynthesis; 1-deoxy-D-xylulose 5-phosphate from D-glyceraldehyde 3-phosphate and pyruvate: step 1/1. Its function is as follows. Catalyzes the acyloin condensation reaction between C atoms 2 and 3 of pyruvate and glyceraldehyde 3-phosphate to yield 1-deoxy-D-xylulose-5-phosphate (DXP). In Francisella tularensis subsp. novicida (strain U112), this protein is 1-deoxy-D-xylulose-5-phosphate synthase.